Reading from the N-terminus, the 268-residue chain is L-cystine-binding protein TcyA (268 aa).

Residues 1 to 19 (MKKALLALFMVVSIAALAA) form the signal peptide. Cysteine 20 is lipidated: N-palmitoyl cysteine. Cysteine 20 is lipidated: S-diacylglycerol cysteine.

The protein belongs to the bacterial solute-binding protein 3 family. As to quaternary structure, the complex is composed of two ATP-binding proteins (TcyC), two transmembrane proteins (TcyB) and a solute-binding protein (TcyA).

It is found in the cell membrane. Functionally, part of the ABC transporter complex TcyABC involved in L-cystine import. This Bacillus subtilis (strain 168) protein is L-cystine-binding protein TcyA (tcyA).